Consider the following 405-residue polypeptide: Growth/differentiation factor 11 (405 aa).

An N-terminal signal peptide occupies residues 1–20; it reads MVLAAPLLLGFLLLALELRP. Positions 21–296 are excised as a propeptide; that stretch reads RGEAAEGPAA…VLENTKRSRR (276 aa). Asn92 carries N-linked (GlcNAc...) asparagine glycosylation. 4 cysteine pairs are disulfide-bonded: Cys302–Cys312, Cys311–Cys370, Cys339–Cys402, and Cys343–Cys404.

This sequence belongs to the TGF-beta family. In terms of assembly, homodimer; disulfide-linked. Interacts directly with ACVR2B. Interacts directly with ACVR2A. Interacts with ACVR1B, TGFBR1 and ACVR1C in an ACVR2B-dependent manner. Interacts with FST isoform 2/FS288. Synthesized as large precursor molecule that undergoes proteolytic cleavage by furin-like proteases. This produces an inactive form consisting of the mature C-terminal portion non-covalently bound to its cleaved N-terminal propeptide. Activation of the mature form requires additional cleavage of the propeptide by a tolloid-like metalloproteinase. Highly expressed in the developing limb bud, initially detected in the distal mesenchyme, and later localizing to regions around the developing bones. Is also expressed in adult dental pulp and brain.

The protein localises to the secreted. Its function is as follows. Secreted signal that acts globally to regulate anterior/posterior axial patterning during development. May play critical roles in patterning both mesodermal and neural tissues. It is required for proper vertebral patterning and orofacial development. Signals through activin receptors type-2, ACVR2A and ACVR2B, and activin receptors type-1, ACVR1B, ACVR1C and TGFBR1 leading to the phosphorylation of SMAD2 and SMAD3. In Mus musculus (Mouse), this protein is Growth/differentiation factor 11 (Gdf11).